A 444-amino-acid chain; its full sequence is MFHGAKGPLLIERIGHLLSINYGEKEERKRWAMQGISYLQEVQCTSTPYLEILVEESGLRPVSLLNSQLVGKPHFSLLGGFDENIARDIISHNFQNAIFQMESEEVPLTKRYQHLEKITQISLLCKNFKGIEEIEYNVKNIIQGRKNFDMLNSMEKDRISHEVVQDDSFSLLRIQMLLCVSYFLQERYFDCCTKFFTMMTSEPLTLKVLSEHLDCMNFISKEEFIMMVNISVLISIPLDNYDDFIYLSDLKQFFQMTPLLVNCLELLINTNFNKFFKIWHGEINKICMESLFLEPSWSSSAAVIMRCKIYFFYLRISKKLQFSYLSSTLGIDLEDIKEELTKLIISGQLNFEIDGDVIHFEDSSILQSIVNEISRNGTMINEVIDKLKNENTDLKDIIQGNPLMYSGGNNTATIINNESSDDMDIDEVNDRSDISDSEGGLFEC.

The region spanning 195 to 367 is the PCI domain; that stretch reads FFTMMTSEPL…IHFEDSSILQ (173 aa). A disordered region spans residues 419–439; the sequence is SSDDMDIDEVNDRSDISDSEG.

As to quaternary structure, component of a COP9 signalosome-like (CSN) complex, composed of RRI1/CSN5, CSN9, RRI2/CSN10, PCI8/CSN11, CSN12 and CSI1. Interacts with PRT1 and RPG1, 2 subunits of the core complex of translation initiation factor 3 (eIF3).

Its subcellular location is the cytoplasm. The protein localises to the nucleus. Its function is as follows. Component of the COP9 signalosome (CSN) complex that acts as an regulator of the ubiquitin (Ubl) conjugation pathway by mediating the deneddylation of the cullin subunit of SCF-type E3 ubiquitin-protein ligase complexes The CSN complex is involved in the regulation of the mating pheromone response. PCI8 may also be involved in transcriptional and translational control. This is Cop9 signalosome complex subunit 11 (PCI8) from Saccharomyces cerevisiae (strain ATCC 204508 / S288c) (Baker's yeast).